A 275-amino-acid polypeptide reads, in one-letter code: Adaptin ear-binding coat-associated protein 1 (275 aa).

Residues K170–P191 form a disordered region. Position 180 is an omega-N-methylarginine (R180). T211 is subject to Phosphothreonine. Short sequence motifs (WXXF motif) lie at residues W252–F255 and W272–F275. The segment at D254 to F275 is disordered. The segment covering S256–F275 has biased composition (polar residues).

This sequence belongs to the NECAP family. As to quaternary structure, interacts with AP1G1 and AP2A1 components of the adapter protein complexes AP-1 and AP-2. Interacts with the GAE domain proteins GGA1, GGA2 and GGA3.

It is found in the cytoplasmic vesicle. It localises to the clathrin-coated vesicle membrane. The protein resides in the cell membrane. Its function is as follows. Involved in endocytosis. In Homo sapiens (Human), this protein is Adaptin ear-binding coat-associated protein 1 (NECAP1).